The chain runs to 96 residues: Frd operon uncharacterized protein C (96 aa).

The protein belongs to the HupF/HypC family.

This chain is Frd operon uncharacterized protein C, found in Proteus vulgaris.